Here is a 109-residue protein sequence, read N- to C-terminus: Nascent polypeptide-associated complex protein (109 aa).

The NAC-A/B domain occupies 3-70 (PMNPKQMKKM…YEVVKRPPKI (68 aa)).

Belongs to the NAC-alpha family. As to quaternary structure, homodimer. Interacts with the ribosome. Binds ribosomal RNA.

Contacts the emerging nascent chain on the ribosome. The chain is Nascent polypeptide-associated complex protein from Archaeoglobus fulgidus (strain ATCC 49558 / DSM 4304 / JCM 9628 / NBRC 100126 / VC-16).